We begin with the raw amino-acid sequence, 1191 residues long: Serine/threonine-protein kinase dkf-2 (1191 aa).

Disordered regions lie at residues 11-48 (YTSMPSSSTSNHRIDRLSSSSSSTFRRDDFRRHSTTTS) and 108-155 (MLSR…GGHV). The segment covering 123 to 139 (TPDDHYSNPSDKRREVP) has biased composition (basic and acidic residues). The segment covering 140–150 (SIRSTSSNSSS) has biased composition (low complexity). Phorbol-ester/DAG-type zinc fingers lie at residues 314 to 364 (PHTL…PNNC) and 466 to 531 (PHTF…AKDC). Positions 549–594 (VSEDRDDDLSLRSGSGGHKKAQNTPSAPLQGSEGSGSPGGAVVSFA) are disordered. The PH domain occupies 632 to 713 (LLKEGWIVHY…VYFVYSSLTD (82 aa)). The segment at 730 to 786 (PSTVSSTDSGYLGSSGASSSCVRSREGSTVSSTITVDRTRRGGSTTSTENSEAESES) is disordered. The span at 738-751 (SGYLGSSGASSSCV) shows a compositional bias: low complexity. The span at 756–765 (GSTVSSTITV) shows a compositional bias: polar residues. Over residues 773-786 (STTSTENSEAESES) the composition is skewed to low complexity. The Protein kinase domain maps to 891 to 1147 (IFAEEVLGSG…VAKAQSHIWM (257 aa)). Residues 897–905 (LGSGQFGTV) and lysine 920 contribute to the ATP site. The active-site Proton acceptor is aspartate 1014. Residues serine 1046 and serine 1050 each carry the phosphoserine modification.

Belongs to the protein kinase superfamily. CAMK Ser/Thr protein kinase family. PKD subfamily. Mg(2+) is required as a cofactor. Phosphorylation on Ser-1046 is the dominant regulator of catalysis, phosphorylation on Ser-1050 has a lesser effect. Prolonged phosphorylation results in ubiquitination and degradation.

Its subcellular location is the cytoplasm. The protein resides in the membrane. The enzyme catalyses L-seryl-[protein] + ATP = O-phospho-L-seryl-[protein] + ADP + H(+). It carries out the reaction L-threonyl-[protein] + ATP = O-phospho-L-threonyl-[protein] + ADP + H(+). Activated by DAG and phorbol esters. Phorbol-ester/DAG-type domain 1 binds phorbol ester with low affinity. Phorbol-ester/DAG-type domain 2 binds phorbol ester with high affinity and targets the kinase to the cell periphery, enabling phosphorylation and activation by colocalized tpa-1. Both domains 1 and 2 appear to bind DAG with equal affinity so may contribute equally to translocation and activation. Converts transient diacylglycerol (DAG) signals into prolonged physiological effects, downstream of PKC. Acts in the intestine to regulate both innate immunity by promoting activation of pmk-1 and also stress response and life span by acting as an upstream, negative regulator of the daf-16 transcription factor. The protein is Serine/threonine-protein kinase dkf-2 of Caenorhabditis briggsae.